The following is a 637-amino-acid chain: Threonine--tRNA ligase (637 aa).

Residues 1 to 61 (MPNVKLPDGN…KEDCSLIIVT (61 aa)) form the TGS domain. The segment at 242–533 (DHRKLGKALD…LIEHYAGKLP (292 aa)) is catalytic. 3 residues coordinate Zn(2+): cysteine 333, histidine 384, and histidine 510.

This sequence belongs to the class-II aminoacyl-tRNA synthetase family. As to quaternary structure, homodimer. It depends on Zn(2+) as a cofactor.

The protein localises to the cytoplasm. The catalysed reaction is tRNA(Thr) + L-threonine + ATP = L-threonyl-tRNA(Thr) + AMP + diphosphate + H(+). Its function is as follows. Catalyzes the attachment of threonine to tRNA(Thr) in a two-step reaction: L-threonine is first activated by ATP to form Thr-AMP and then transferred to the acceptor end of tRNA(Thr). Also edits incorrectly charged L-seryl-tRNA(Thr). The chain is Threonine--tRNA ligase from Legionella pneumophila (strain Paris).